Consider the following 331-residue polypeptide: C-type lectin domain family 4 member K (331 aa).

The Cytoplasmic segment spans residues 1–41 (MPEAEMKEEAPEAHFTVDKQNISLWPREPPPKQDLSPVLRK). A helical; Signal-anchor for type II membrane protein membrane pass occupies residues 42-62 (PLCICVAFTCLALVLVTSIVL). The Extracellular portion of the chain corresponds to 63-331 (QAVFYPRLMG…CKRPYVQTTE (269 aa)). N-linked (GlcNAc...) asparagine glycans are attached at residues Asn90 and Asn116. Residues 106–197 (DDAEVQMQIV…LKQQSDILEM (92 aa)) adopt a coiled-coil conformation. The region spanning 205–323 (FSGNFYYFSR…CDNTFLFICK (119 aa)) is the C-type lectin domain. 2 disulfides stabilise this stretch: Cys226-Cys322 and Cys298-Cys314.

As to quaternary structure, homotrimer. As to expression, expressed by Langerhans cells. Expressed in dendritic cells and by scattered cells in lymph nodes and spleen. Also detected in some non-lymphoid tissues such as lung, liver and heart.

The protein localises to the membrane. Its function is as follows. Calcium-dependent lectin displaying mannose-binding specificity. Induces the formation of Birbeck granules (BGs); is a potent regulator of membrane superimposition and zippering. Binds to sulfated as well as mannosylated glycans, keratan sulfate (KS) and beta-glucans. Facilitates uptake of antigens and is involved in the routing and/or processing of antigen for presentation to T cells. The chain is C-type lectin domain family 4 member K (Cd207) from Mus musculus (Mouse).